The primary structure comprises 110 residues: GGSGGSGSSGNFTTASNIHMSSVTNTSIAGTGGTGGTGTGTGTGTGTGTGTGTGTDTGTGTGTRNGTNSGTNSGTRTGTASSYRGGGGGAGGGGGVTIQHLTLTESLLNK.

Positions 23–97 (VTNTSIAGTG…GGAGGGGGVT (75 aa)) are disordered. 12 consecutive repeat copies span residues 30 to 31 (GT), 33 to 34 (GT), 36 to 37 (GT), 38 to 39 (GT), 40 to 41 (GT), 42 to 43 (GT), 44 to 45 (GT), 46 to 47 (GT), 48 to 49 (GT), 50 to 51 (GT), 52 to 53 (GT), and 54 to 55 (GT). The span at 30 to 63 (GTGGTGGTGTGTGTGTGTGTGTGTGTDTGTGTGT) shows a compositional bias: gly residues. The interval 30–79 (GTGGTGGTGTGTGTGTGTGTGTGTGTDTGTGTGTRNGTNSGTNSGTRTGT) is 24 X 2 AA approximate tandem repeats of G-T. A 13; approximate repeat occupies 56–57 (DT). 3 consecutive repeat copies span residues 58–59 (GT), 60–61 (GT), and 62–63 (GT). The stretch at 64–65 (RN) is one 17; approximate repeat. Positions 64–83 (RNGTNSGTNSGTRTGTASSY) are enriched in low complexity. Repeat unit 18 spans residues 66–67 (GT). The 19; approximate repeat unit spans residues 68–69 (NS). Copy 20 of the repeat occupies 70–71 (GT). The stretch at 72–73 (NS) is one 21; approximate repeat. Residues 74–75 (GT) form repeat 22. Residues 76-77 (RT) form a 23; approximate repeat. Repeat 24 spans residues 78 to 79 (GT). Residues 84 to 96 (RGGGGGAGGGGGV) are compositionally biased toward gly residues.

In terms of assembly, forms a heterodimer with timeless (TIM); the complex then translocates into the nucleus. Phosphorylated with a circadian rhythmicity, probably by the double-time protein (dbt). Phosphorylation could be implicated in the stability of per monomer and in the formation of heterodimer per-tim.

It localises to the nucleus. It is found in the cytoplasm. The protein resides in the perinuclear region. Its function is as follows. Essential for biological clock functions. Determines the period length of circadian and ultradian rhythms; an increase in PER dosage leads to shortened circadian rhythms and a decrease leads to lengthened circadian rhythms. Essential for the circadian rhythmicity of locomotor activity, eclosion behavior, and for the rhythmic component of the male courtship song that originates in the thoracic nervous system. The biological cycle depends on the rhythmic formation and nuclear localization of the TIM-PER complex. Light induces the degradation of TIM, which promotes elimination of PER. Nuclear activity of the heterodimer coordinatively regulates PER and TIM transcription through a negative feedback loop. Behaves as a negative element in circadian transcriptional loop. Does not appear to bind DNA, suggesting indirect transcriptional inhibition. In Drosophila erecta (Fruit fly), this protein is Period circadian protein (per).